The chain runs to 977 residues: Protein bric-a-brac 1 (977 aa).

The tract at residues 1–97 (MASAQAETNV…RSSSVASPSS (97 aa)) is disordered. The segment covering 34–43 (PKSNRSSPTQ) has biased composition (polar residues). A compositionally biased stretch (basic and acidic residues) spans 44 to 69 (QEEKRIKSEDRTSPTGGAKDEDKESQ). Over residues 80-97 (SPVSSPQGRSSSVASPSS) the composition is skewed to low complexity. Positions 127–192 (VDVTLACDGR…MYRGEINVSQ (66 aa)) constitute a BTB domain. 4 disordered regions span residues 221 to 249 (AAAA…HDRE), 281 to 348 (ERQQ…GSTV), 362 to 434 (DMPS…RFPL), and 447 to 497 (SGLG…ADDL). The segment covering 316–330 (ERMELEQKERERQRD) has biased composition (basic and acidic residues). A compositionally biased stretch (low complexity) spans 372 to 396 (PLSRSSRPHSQSPQQQQAQQQGQLP). A compositionally biased stretch (gly residues) spans 469-491 (GGGVGGGGVGGGGAGGVGSGGGS). The region spanning 559–611 (FRERGPLKSWRPETMAEAIFSVLKEGLSLSQAARKYDIPYPTFVLYANRVHNM) is the HTH psq-type domain. A DNA-binding region (H-T-H motif) is located at residues 569 to 614 (RPETMAEAIFSVLKEGLSLSQAARKYDIPYPTFVLYANRVHNMLGP). The segment at residues 621-632 (DLRPKGRGRPQR) is a DNA-binding region (a.T hook). 2 disordered regions span residues 772 to 900 (ASIS…LGDL) and 925 to 977 (VGAS…TTSE). Composition is skewed to low complexity over residues 804 to 816 (MAVA…QQQA), 838 to 853 (QQQQ…GGHQ), 862 to 872 (ASSSSSASSSS), and 925 to 966 (VGAS…SSGG).

As to expression, leg imaginal disk at the central region of the tarsus and in eye antenna disk at the basal cylinder.

It localises to the nucleus. Its function is as follows. Probably acts as a transcriptional regulator. Required for the specification of the tarsal segment. Also involved in antenna development. This Drosophila melanogaster (Fruit fly) protein is Protein bric-a-brac 1 (bab1).